Here is a 340-residue protein sequence, read N- to C-terminus: MSTMNVLICQQPKELVWKQREIPIPGDNEALIKIKSVGICGTDIHAWGGNQPFFSYPRVLGHEICGEIVGLGKNIADLKNGQQVAVIPYVACQQCPACKSGRTNCCEKISVIGVHQDGGFSEYLSVPVANILPADGIDPQAAALIEPFAISAHAVRRAAIAPGEQVLVVGAGPIGLGAAAIAKADGAQVVVADTSPARREHVATRLELPLLDPSAEDFDAQLRAQFGGSLAQKVIDATGNQHAMNNTVNLIRHGGTVVFVGLFKGELQFSDPEFHKKETTMMGSRNATPEDFAKVGRLMAEGKITADMMLTHRYPFATLAETYERDVINNRELIKGVITF.

Zn(2+) is bound by residues C40, C65, C92, C95, C98, C106, and E146.

The protein belongs to the zinc-containing alcohol dehydrogenase family. Zn(2+) serves as cofactor.

The catalysed reaction is L-galactonate + NAD(+) = keto-D-tagaturonate + NADH + H(+). Inhibited by EDTA. Its function is as follows. Catalyzes the oxidation of L-galactonate to D-tagaturonate. Required for growth on L-galactonate as the sole carbon source. In vitro, can also use L-gulonate. This Escherichia coli (strain K12) protein is L-galactonate-5-dehydrogenase (lgoD).